The chain runs to 541 residues: Probable inorganic phosphate transporter 1-12 (541 aa).

At 1–26 the chain is on the cytoplasmic side; sequence MGRQDQQLQVLNALDAAKTQWYHFTA. A helical transmembrane segment spans residues 27 to 47; it reads IIVAGMGFFTDAYDLFCISLV. The Extracellular portion of the chain corresponds to 48 to 70; it reads TKLLGRIYYTDPASPTPGSLPPN. Residues 71-91 form a helical membrane-spanning segment; that stretch reads IAAAVNGVALCGTLSGQLFFG. The Cytoplasmic segment spans residues 92 to 100; that stretch reads WLGDKLGRK. A helical membrane pass occupies residues 101–121; sequence SVYGMTLLLMVICSIASGLSF. Residues 122–124 lie on the Extracellular side of the membrane; it reads SHT. The helical transmembrane segment at 125-145 threads the bilayer; sequence PTSVMATLCFFRFWLGFGIGG. The Cytoplasmic segment spans residues 146-163; it reads DYPLSATIMSEYANKKTR. Residues 164–184 traverse the membrane as a helical segment; it reads GAFIAAVFAMQGFGILAGGVV. The Extracellular segment spans residues 185 to 213; sequence TLAMSAGFQAAFPAPAYEVNAAASTVPQA. Residues 214–234 form a helical membrane-spanning segment; that stretch reads DYVWRIILMLGALPAILTYYW. The Cytoplasmic segment spans residues 235–297; that stretch reads RMKMPETARY…ARFAKRHGAH (63 aa). The helical transmembrane segment at 298–318 threads the bilayer; it reads LLGTAATWFLVDVAYYSQNLF. Residues 319-349 lie on the Extracellular side of the membrane; sequence QKDIFTSIHWIPKARTMSELEEVFRISRAQT. A helical transmembrane segment spans residues 350-370; sequence LIALCGTVPGYWFTVFLIDII. Residues 371–374 are Cytoplasmic-facing; the sequence is GRFK. A helical transmembrane segment spans residues 375-395; that stretch reads IQLLGFAGMTAFMLGLAIPYH. The Extracellular portion of the chain corresponds to 396–403; that stretch reads HWTMPGNQ. A helical membrane pass occupies residues 404 to 424; the sequence is VIFVFLYGFTFFFANFGPNAT. At 425-443 the chain is on the cytoplasmic side; sequence TFIVPAEIFPARLRSTCHG. Residues 444–464 traverse the membrane as a helical segment; sequence ISAASGKAGAIIGAFGFLYAA. The Extracellular portion of the chain corresponds to 465–484; it reads QPQDKAHVDAGYKPGIGVRN. The helical transmembrane segment at 485–505 threads the bilayer; sequence ALFVLAGCNLVGFLMTWMLVP. The Cytoplasmic segment spans residues 506 to 541; that stretch reads ESKGKSLEEMSGEADDEEASANGGATAVNSSGVEMV. The disordered stretch occupies residues 512-541; it reads LEEMSGEADDEEASANGGATAVNSSGVEMV. Residues 515–524 show a composition bias toward acidic residues; it reads MSGEADDEEA. Positions 532–541 are enriched in polar residues; sequence AVNSSGVEMV.

The protein belongs to the major facilitator superfamily. Phosphate:H(+) symporter (TC 2.A.1.9) family.

Its subcellular location is the membrane. High-affinity transporter for external inorganic phosphate. This Oryza sativa subsp. japonica (Rice) protein is Probable inorganic phosphate transporter 1-12 (PHT1-12).